Here is a 593-residue protein sequence, read N- to C-terminus: MEGKWLLCMLLVLGTTIVQAHEGHDDDMIDIEDDLDDVIEEVEDSKSKPDTSAPTSPKVTYKAPVPTGEVYFADSFDRGTLSGWILSKAKKDDTDDEIAKYDGKWEVDEMKETKLPGDKGLVLMSRAKHHAISAKLNKPFLFDTKPLIVQYEVNFQNGIECGGAYVKLLSKTPELNLDQFHDKTPYTIMFGPDKCGEDYKLHFIFRHKNPKTGVYEEKHAKRPDADLKTYFTDKKTHLYTLILNPDNSFEILVDQSIVNSGNLLNDMTPPVNPSREIEDPEDQKPEDWDERPKIPDPDAVKPDDWNEDAPAKIPDEEATKPDGWLDDEPEYVPDPDAEKPEDWDEDMDGEWEAPQIANPKCESAPGCGVWQRPMIDNPNYKGKWKPPMIDNPNYQGIWKPRKIPNPDFFEDLEPFKMTPFSAIGLELWSMTSDIFFDNFIVCGDRRVVDDWANDGWGLKKAADGAAEPGVVGQMIEAAEERPWLWVVYVLTVALPVFLVILFCCSGKKQSSPVEYKKTDAPQPDVKEEEEEKEEEKDKGDEEEEGEEKLEEKQKSDAEEDGGTASQEEDDRKPKAEEDEILNRSPRNRKPRRE.

Positions 1–20 are cleaved as a signal peptide; the sequence is MEGKWLLCMLLVLGTTIVQA. Residues 21–482 lie on the Lumenal side of the membrane; that stretch reads HEGHDDDMID…QMIEAAEERP (462 aa). Ca(2+) is bound by residues Ser75 and Asp118. Position 138 is an N6-acetyllysine (Lys138). Cys161 and Cys195 are oxidised to a cystine. Positions 165, 167, 186, and 193 each coordinate an alpha-D-glucoside. The segment at 261-346 is disordered; sequence GNLLNDMTPP…AEKPEDWDED (86 aa). The segment at 277–410 is p domain (Extended arm); the sequence is IEDPEDQKPE…RKIPNPDFFE (134 aa). Repeat copies occupy residues 279-290, 296-307, 315-326, 334-345, and 349-359. 4 X approximate repeats stretches follow at residues 279–345 and 349–406; these read DPED…DWDE and GEWE…IPNP. Residues 282-320 are compositionally biased toward basic and acidic residues; that stretch reads DQKPEDWDERPKIPDPDAVKPDDWNEDAPAKIPDEEATK. Positions 324 to 346 are enriched in acidic residues; the sequence is WLDDEPEYVPDPDAEKPEDWDED. The tract at residues 327 to 360 is interaction with PPIB; the sequence is DEPEYVPDPDAEKPEDWDEDMDGEWEAPQIANPK. A disulfide bridge links Cys361 with Cys367. Tandem repeats lie at residues 368 to 378, 382 to 392, and 396 to 406. Glu426 contributes to the an alpha-D-glucoside binding site. Asp437 is a Ca(2+) binding site. Residues 483–503 traverse the membrane as a helical segment; sequence WLWVVYVLTVALPVFLVILFC. 2 S-palmitoyl cysteine lipidation sites follow: Cys503 and Cys504. At 504–593 the chain is on the cytoplasmic side; the sequence is CSGKKQSSPV…SPRNRKPRRE (90 aa). The interval 504-593 is sufficient to mediate interaction with SGIP1; it reads CSGKKQSSPV…SPRNRKPRRE (90 aa). The interval 511 to 593 is disordered; that stretch reads SPVEYKKTDA…SPRNRKPRRE (83 aa). Over residues 526–548 the composition is skewed to acidic residues; the sequence is KEEEEEKEEEKDKGDEEEEGEEK. Ser555 carries the post-translational modification Phosphoserine. A Phosphothreonine modification is found at Thr563. Ser565 carries the post-translational modification Phosphoserine; by MAPK3. Ser584 bears the Phosphoserine mark.

It belongs to the calreticulin family. In terms of assembly, interacts with MAPK3/ERK1. Interacts with KCNH2. Associates with ribosomes. Interacts with SGIP1; involved in negative regulation of endocytosis. The palmitoylated form interacts with the ribosome-translocon complex component SSR1, promoting efficient folding of glycoproteins. Interacts with SERPINA2P/SERPINA2 and with the S and Z variants of SERPINA1. Interacts with PPIB. Interacts with ZNRF4. Interacts with SMIM22. Interacts with TMX2. Interacts with TMEM35A/NACHO and CHRNA7. Interacts with reticulophagy regulators RETREG2 and RETREG3. Interacts with DNM1L; may form part of a larger protein complex at the ER-mitochondrial interface during mitochondrial fission. Interacts with ADAM7. Phosphorylated at Ser-565 by MAPK3/ERK1. Phosphorylation by MAPK3/ERK1 increases its association with ribosomes. In terms of processing, palmitoylation by DHHC6 leads to the preferential localization to the perinuclear rough ER. It mediates the association of calnexin with the ribosome-translocon complex (RTC) which is required for efficient folding of glycosylated proteins. Post-translationally, ubiquitinated, leading to proteasomal degradation. Probably ubiquitinated by ZNRF4.

It is found in the endoplasmic reticulum membrane. It localises to the mitochondrion membrane. The protein resides in the melanosome membrane. Calcium-binding protein that interacts with newly synthesized monoglucosylated glycoproteins in the endoplasmic reticulum. It may act in assisting protein assembly and/or in the retention within the ER of unassembled protein subunits. It seems to play a major role in the quality control apparatus of the ER by the retention of incorrectly folded proteins. Associated with partial T-cell antigen receptor complexes that escape the ER of immature thymocytes, it may function as a signaling complex regulating thymocyte maturation. Additionally it may play a role in receptor-mediated endocytosis at the synapse. This chain is Calnexin (CANX), found in Canis lupus familiaris (Dog).